A 442-amino-acid polypeptide reads, in one-letter code: MAANTISLSNVAASKNLNSFQSRAFIAPPTIFFPVASAKSKPGELSLSSTTLSRSRVRAGASQLMNEPLNDQRSISSPTVVEVDLGDRSYPIYIGAGLLDHSELLQRHVHGKRVLVVTNDRVAPLYLDKTIDALTRGNPNVTVESVILPDGEKYKDMDTLMKVFDKAIESRLDRRCTFVALGGGVIGDMCGYAAASYLRGVNFIQIPTTVMAQVDSSVGGKTGINHRLGKNLIGAFYQPQCVLVDTDTLNTLPDREMASGLAEVIKYGLIRDAEFFEWQEKNIEALLARDPAALAFAIKRSCENKADVVSQDEKESGLRATLNLGHTFGHAIETGFGYGEWLHGEAVAAGTVMAVDMSYRLGWIDESIVKRVNKILVRAKLPTTPPESMTVSMFKSIMAVDKKVADGLLRLILLKGPLGNCVFTGDYDREALDATLRAFSKS.

A chloroplast-targeting transit peptide spans Met-1–Arg-58. Ala-59 carries the post-translational modification N-acetylalanine. Residues Asn-119, Asp-150 to Glu-152, Lys-155, Gly-183 to Asp-188, Thr-208 to Thr-209, Lys-221, Lys-230, and Thr-248 to Thr-251 each bind NAD(+). Glu-263 contacts a divalent metal cation. NAD(+) is bound at residue Lys-305. The a divalent metal cation site is built by His-326 and His-343.

Belongs to the sugar phosphate cyclases superfamily. Dehydroquinate synthase family. As to quaternary structure, homodimer. A divalent metal cation is required as a cofactor. The cofactor is NAD(+).

It localises to the plastid. It is found in the chloroplast. It carries out the reaction 7-phospho-2-dehydro-3-deoxy-D-arabino-heptonate = 3-dehydroquinate + phosphate. Its pathway is metabolic intermediate biosynthesis; chorismate biosynthesis; chorismate from D-erythrose 4-phosphate and phosphoenolpyruvate: step 2/7. Functionally, catalyzes the second step in the shikimate pathway. The protein is 3-dehydroquinate synthase, chloroplastic (DHQS) of Arabidopsis thaliana (Mouse-ear cress).